Consider the following 97-residue polypeptide: MKLTTVLVVALLVLAACQFTVTDNSGDDPENPSLRSAGENQNPDSTKTITAWATRDMTNMRRGLNRPSKRCLAGSARCEFHKPSTCCSGHCIFWWCA.

The N-terminal stretch at 1–22 (MKLTTVLVVALLVLAACQFTVT) is a signal peptide. The interval 22–46 (TDNSGDDPENPSLRSAGENQNPDST) is disordered. The propeptide occupies 23 to 68 (DNSGDDPENPSLRSAGENQNPDSTKTITAWATRDMTNMRRGLNRPS). 3 disulfide bridges follow: C71/C87, C78/C91, and C86/C96.

This sequence belongs to the conotoxin O1 superfamily. Expressed by the venom duct.

The protein resides in the secreted. Its function is as follows. Probable neurotoxin with unknown target. Possibly targets ion channels. The protein is Conotoxin Cal6.1b of Californiconus californicus (California cone).